Here is a 667-residue protein sequence, read N- to C-terminus: tRNA uridine 5-carboxymethylaminomethyl modification enzyme MnmG (667 aa).

13 to 18 (GGGHAG) is a binding site for FAD. 280 to 294 (GPRYCPSVEDKINRF) is an NAD(+) binding site.

It belongs to the MnmG family. In terms of assembly, homodimer. Heterotetramer of two MnmE and two MnmG subunits. The cofactor is FAD.

It is found in the cytoplasm. In terms of biological role, NAD-binding protein involved in the addition of a carboxymethylaminomethyl (cmnm) group at the wobble position (U34) of certain tRNAs, forming tRNA-cmnm(5)s(2)U34. The chain is tRNA uridine 5-carboxymethylaminomethyl modification enzyme MnmG from Polaromonas naphthalenivorans (strain CJ2).